The primary structure comprises 1946 residues: Sickle tail protein (1946 aa).

2 disordered regions span residues Met-1–Pro-83 and Glu-113–Ala-176. Residues Asp-18–Glu-36 show a composition bias toward polar residues. Residues Ala-38–Leu-47 are compositionally biased toward basic and acidic residues. Ser-169 bears the Phosphoserine mark. Tyr-244 bears the Phosphotyrosine mark. 2 disordered regions span residues His-305–Pro-324 and Ala-339–Lys-374. Residues His-308–Pro-324 are compositionally biased toward pro residues. Over residues Ser-352–Ile-367 the composition is skewed to low complexity. Ser-357 carries O-linked (GlcNAc) serine glycosylation. A phosphoserine mark is found at Ser-361 and Ser-365. Tyr-393 carries the phosphotyrosine modification. Residues Ser-455–Lys-512 are disordered. Thr-470 carries the post-translational modification Phosphothreonine. The residue at position 474 (Ser-474) is a Phosphoserine. A compositionally biased stretch (basic and acidic residues) spans Arg-477–Pro-488. Coiled-coil stretches lie at residues Arg-557 to Leu-581 and Thr-644 to Ile-685. Position 809 is a phosphoserine (Ser-809). Disordered stretches follow at residues Glu-853–Ser-875 and Ser-891–Gly-947. Composition is skewed to polar residues over residues Ser-891–Gln-909 and Gln-927–Gly-947. Residues Ser-962 to Lys-990 adopt a coiled-coil conformation. The disordered stretch occupies residues Pro-1008 to Glu-1221. Phosphoserine is present on residues Ser-1032, Ser-1035, Ser-1038, and Ser-1049. Positions Ser-1049–Arg-1058 are enriched in pro residues. Residues Asn-1151 to Asn-1162 are compositionally biased toward polar residues. A compositionally biased stretch (basic and acidic residues) spans Pro-1176–Val-1194. Ser-1466 bears the Phosphoserine mark. A coiled-coil region spans residues Phe-1469 to Asp-1495. Disordered regions lie at residues Glu-1482–Gln-1567, Ala-1622–Thr-1664, and Val-1691–Ser-1946. A compositionally biased stretch (acidic residues) spans Lys-1484–Asp-1495. Residues Val-1498 to Gln-1508 show a composition bias toward polar residues. 2 stretches are compositionally biased toward basic and acidic residues: residues Val-1509 to Gln-1518 and Ala-1622 to Glu-1644. Residues Glu-1659–Arg-1688 are a coiled coil. The span at Lys-1739–Arg-1759 shows a compositional bias: polar residues. Ser-1741 carries the phosphoserine modification. Basic and acidic residues predominate over residues Lys-1765–Gln-1777. The segment covering Ala-1806 to Ser-1825 has biased composition (low complexity). Ser-1843 carries the phosphoserine modification. Polar residues predominate over residues His-1851–Phe-1866. Residues Ala-1890 to Ser-1899 are compositionally biased toward low complexity. A phosphoserine mark is found at Ser-1899, Ser-1902, and Ser-1905. Residues His-1920–Ser-1946 show a composition bias toward polar residues.

As to quaternary structure, interacts with CPNE4 (via VWFA domain). As to expression, expressed predominantly in the notochord and mesonephros during embryogenesis as well as in other areas such as the epithalamus sulcus, lens vesicle, inner retinal layer, heart, hepatic primordial surface, infundibulum, surface ectoderm, hind gut and limb bud mesenchyme. In adults, expressed in a range of tissues including the nucleus pulposus, corpus callosum, kidney, cardiac muscle, Sertoli cells and hair follicles.

Its subcellular location is the cytoplasm. The protein localises to the cytoskeleton. It localises to the microtubule organizing center. The protein resides in the centrosome. In terms of biological role, required for normal development of intervertebral disks. This Mus musculus (Mouse) protein is Sickle tail protein.